A 612-amino-acid chain; its full sequence is Peroxisomal carnitine O-octanoyltransferase (612 aa).

Methionine 1 bears the N-acetylmethionine mark. An N6-succinyllysine mark is found at lysine 40 and lysine 57. Catalysis depends on histidine 327, which acts as the Proton acceptor. CoA-binding positions include lysine 406 and 410–417 (KKEALHPD). At lysine 406 the chain carries N6-acetyllysine; alternate. Position 406 is an N6-succinyllysine; alternate (lysine 406). Residues tyrosine 439, threonine 441, and threonine 452 each contribute to the (R)-carnitine site. Residues 610 to 612 (AHL) carry the Microbody targeting signal motif.

This sequence belongs to the carnitine/choline acetyltransferase family. In terms of tissue distribution, liver.

Its subcellular location is the peroxisome. The catalysed reaction is octanoyl-CoA + (R)-carnitine = O-octanoyl-(R)-carnitine + CoA. The enzyme catalyses 4,8-dimethylnonanoyl-CoA + (R)-carnitine = O-4,8-dimethylnonanoyl-(R)-carnitine + CoA. Its pathway is lipid metabolism; fatty acid beta-oxidation. Its function is as follows. Beta-oxidation of fatty acids. The highest activity concerns the C6 to C10 chain length substrate. This Rattus norvegicus (Rat) protein is Peroxisomal carnitine O-octanoyltransferase (Crot).